We begin with the raw amino-acid sequence, 251 residues long: MMIRLIIHGCNGKMGKVVAKLAKENPEFEVVAGVDKNTFPLDFPVYSDLKEVKEEADVVIDFSYHEAIPNLVKEAAKRKIPVVIATTGLSEEELKTVEEASKEIPIFRSANMSLGINVLISLVKEAAKVLEGFDIEIVEKHHNMKKDAPSGTALMIADAINQVLPEKREYVYGRYTKTEQRKPNEIGIHAVRGGTIVGEHDVIFAGPNEVITISHSAQSREVFGYGALKAAKFLIGQKPGLYTMEDLVKKG.

NAD(+) contacts are provided by residues 9–14 (GCNGKM), 85–87 (ATT), and 109–112 (SANM). The active-site Proton donor/acceptor is the histidine 141. Histidine 142 provides a ligand contact to (S)-2,3,4,5-tetrahydrodipicolinate. Lysine 145 serves as the catalytic Proton donor. 151 to 152 (GT) contacts (S)-2,3,4,5-tetrahydrodipicolinate.

The protein belongs to the DapB family.

Its subcellular location is the cytoplasm. The enzyme catalyses (S)-2,3,4,5-tetrahydrodipicolinate + NAD(+) + H2O = (2S,4S)-4-hydroxy-2,3,4,5-tetrahydrodipicolinate + NADH + H(+). The catalysed reaction is (S)-2,3,4,5-tetrahydrodipicolinate + NADP(+) + H2O = (2S,4S)-4-hydroxy-2,3,4,5-tetrahydrodipicolinate + NADPH + H(+). It participates in amino-acid biosynthesis; L-lysine biosynthesis via DAP pathway; (S)-tetrahydrodipicolinate from L-aspartate: step 4/4. Catalyzes the conversion of 4-hydroxy-tetrahydrodipicolinate (HTPA) to tetrahydrodipicolinate. The protein is 4-hydroxy-tetrahydrodipicolinate reductase of Caldanaerobacter subterraneus subsp. tengcongensis (strain DSM 15242 / JCM 11007 / NBRC 100824 / MB4) (Thermoanaerobacter tengcongensis).